A 355-amino-acid polypeptide reads, in one-letter code: Peptide chain release factor 1 (355 aa).

Glutamine 233 is subject to N5-methylglutamine.

Belongs to the prokaryotic/mitochondrial release factor family. In terms of processing, methylated by PrmC. Methylation increases the termination efficiency of RF1.

The protein localises to the cytoplasm. Its function is as follows. Peptide chain release factor 1 directs the termination of translation in response to the peptide chain termination codons UAG and UAA. This is Peptide chain release factor 1 from Bacillus mycoides (strain KBAB4) (Bacillus weihenstephanensis).